Here is a 128-residue protein sequence, read N- to C-terminus: Deoxycytidylate deaminase (128 aa).

The CMP/dCMP-type deaminase domain occupies 5–128 (DWDEYFLGIA…IERVVYPKES (124 aa)). Histidine 81 is a Zn(2+) binding site. Glutamate 83 functions as the Proton donor in the catalytic mechanism. Zn(2+) is bound by residues cysteine 107 and cysteine 110.

The protein belongs to the cytidine and deoxycytidylate deaminase family.

It carries out the reaction dCMP + H2O + H(+) = dUMP + NH4(+). The sequence is that of Deoxycytidylate deaminase (36.1) from Mycobacterium (Mycobacteriophage D29).